A 207-amino-acid chain; its full sequence is Large ribosomal subunit protein bL25 (207 aa).

This sequence belongs to the bacterial ribosomal protein bL25 family. CTC subfamily. In terms of assembly, part of the 50S ribosomal subunit; part of the 5S rRNA/L5/L18/L25 subcomplex. Contacts the 5S rRNA. Binds to the 5S rRNA independently of L5 and L18.

In terms of biological role, this is one of the proteins that binds to the 5S RNA in the ribosome where it forms part of the central protuberance. This is Large ribosomal subunit protein bL25 from Dictyoglomus turgidum (strain DSM 6724 / Z-1310).